A 348-amino-acid chain; its full sequence is Guanine nucleotide-binding protein alpha-13 subunit (348 aa).

Residue Gly2 is the site of N-myristoyl glycine attachment. A lipid anchor (S-palmitoyl cysteine) is attached at Cys3. Residues 34–348 form the G-alpha domain; that stretch reads SHIRLLLLGS…VFKDIAKRKK (315 aa). The tract at residues 37–50 is G1 motif; sequence RLLLLGSAESGKTT. Residues 42-49, 176-182, 201-205, 270-273, and Ala326 contribute to the GTP site; these read GSAESGKT, IMAYVPT, DIGGQ, and NEID. The interval 174–182 is G2 motif; it reads DLIMAYVPT. Thr182 lines the Mg(2+) pocket. Positions 197–206 are G3 motif; that stretch reads FQLFDIGGQK. Residues 266–273 form a G4 motif region; the sequence is YLFLNEID. The interval 324-329 is G5 motif; sequence CIAIDT.

This sequence belongs to the G-alpha family. G proteins are composed of 3 units; alpha, beta and gamma. The alpha chain contains the guanine nucleotide binding site.

Guanine nucleotide-binding proteins (G proteins) are involved as modulators or transducers in various transmembrane signaling systems. The protein is Guanine nucleotide-binding protein alpha-13 subunit (gpa-13) of Caenorhabditis elegans.